The chain runs to 261 residues: 3-hydroxyacyl-CoA dehydrogenase type-2 (261 aa).

N-acetylalanine is present on Ala2. Residues Ser20, Leu22, and Asp41 each coordinate NAD(+). At Lys53 the chain carries N6-acetyllysine; alternate. An N6-succinyllysine; alternate modification is found at Lys53. Val65 is a binding site for NAD(+). Lys69 bears the N6-acetyllysine mark. Cys91 contributes to the NAD(+) binding site. 2 positions are modified to N6-acetyllysine: Lys99 and Lys105. Ser155 is a substrate binding site. 4 residues coordinate NAD(+): Tyr168, Lys172, Phe201, and Thr203. Tyr168 serves as the catalytic Proton acceptor. Position 212 is an N6-acetyllysine; alternate (Lys212). The residue at position 212 (Lys212) is an N6-succinyllysine; alternate.

The protein belongs to the short-chain dehydrogenases/reductases (SDR) family. In terms of assembly, homotetramer. Component of mitochondrial ribonuclease P, a complex composed of TRMT10C/MRPP1, HSD17B10/MRPP2 and PRORP/MRPP3. Interacts with TRMT10C/MRPP1; forming the MRPP1-MRPP2 subcomplex of the mitochondrial ribonuclease P complex.

It is found in the mitochondrion. Its subcellular location is the mitochondrion matrix. The protein localises to the mitochondrion nucleoid. It catalyses the reaction a (3S)-3-hydroxyacyl-CoA + NAD(+) = a 3-oxoacyl-CoA + NADH + H(+). It carries out the reaction (2S,3S)-3-hydroxy-2-methylbutanoyl-CoA + NAD(+) = 2-methyl-3-oxobutanoyl-CoA + NADH + H(+). The catalysed reaction is testosterone + NAD(+) = androst-4-ene-3,17-dione + NADH + H(+). The enzyme catalyses 5alpha-androstane-3alpha,17beta-diol + NAD(+) = 17beta-hydroxy-5alpha-androstan-3-one + NADH + H(+). It catalyses the reaction 17beta-estradiol + NAD(+) = estrone + NADH + H(+). It carries out the reaction cholate + NAD(+) = 3alpha,12alpha-dihydroxy-7-oxo-5beta-cholanate + NADH + H(+). The catalysed reaction is (3S)-3-hydroxybutanoyl-CoA + NAD(+) = acetoacetyl-CoA + NADH + H(+). The enzyme catalyses (3S)-hydroxyoctanoyl-CoA + NAD(+) = 3-oxooctanoyl-CoA + NADH + H(+). It catalyses the reaction (3S)-hydroxyhexadecanoyl-CoA + NAD(+) = 3-oxohexadecanoyl-CoA + NADH + H(+). It carries out the reaction 17beta-hydroxy-5alpha-androstan-3-one + NAD(+) = 5alpha-androstan-3,17-dione + NADH + H(+). The catalysed reaction is 5alpha-pregnan-20beta-ol-3-one + NAD(+) = 5alpha-pregnane-3,20-dione + NADH + H(+). The enzyme catalyses 3alpha-hydroxy-5alpha-pregnan-20-one + NAD(+) = 5alpha-pregnane-3,20-dione + NADH + H(+). It catalyses the reaction cortisone + NAD(+) = 17alpha-hydroxypregn-4-en-3,11,20-trione-21-al + NADH + H(+). It carries out the reaction 11-dehydrocorticosterone + NAD(+) = pregn-4-ene-3,11,20,21-tetraone + NADH + H(+). The catalysed reaction is cortisol + NAD(+) = 11beta,17alpha-dihydroxypregn-4-ene-3,20,21-trione + NADH + H(+). The enzyme catalyses chenodeoxycholate + NAD(+) = 7-oxolithocholate + NADH + H(+). It catalyses the reaction ursodeoxycholate + NAD(+) = 7-oxolithocholate + NADH + H(+). It carries out the reaction 3beta,7beta-dihydroxy-5beta-cholan-24-oate + NAD(+) = 3beta-hydroxy-7-oxo-5beta-cholan-24-oate + NADH + H(+). Its pathway is amino-acid degradation; L-isoleucine degradation. It participates in lipid metabolism; fatty acid beta-oxidation. The protein operates within steroid metabolism. It functions in the pathway lipid metabolism; bile acid biosynthesis. Functionally, mitochondrial dehydrogenase involved in pathways of fatty acid, branched-chain amino acid and steroid metabolism. Acts as (S)-3-hydroxyacyl-CoA dehydrogenase in mitochondrial fatty acid beta-oxidation, a major degradation pathway of fatty acids. Catalyzes the third step in the beta-oxidation cycle, namely the reversible conversion of (S)-3-hydroxyacyl-CoA to 3-ketoacyl-CoA. Preferentially accepts straight medium- and short-chain acyl-CoA substrates with highest efficiency for (3S)-hydroxybutanoyl-CoA. Acts as 3-hydroxy-2-methylbutyryl-CoA dehydrogenase in branched-chain amino acid catabolic pathway. Catalyzes the oxidation of 3-hydroxy-2-methylbutanoyl-CoA into 2-methyl-3-oxobutanoyl-CoA, a step in isoleucine degradation pathway. Has hydroxysteroid dehydrogenase activity toward steroid hormones and bile acids. Catalyzes the oxidation of 3alpha-, 17beta-, 20beta- and 21-hydroxysteroids and 7alpha- and 7beta-hydroxy bile acids. Oxidizes allopregnanolone/brexanolone at the 3alpha-hydroxyl group, which is known to be critical for the activation of gamma-aminobutyric acid receptors (GABAARs) chloride channel. Has phospholipase C-like activity toward cardiolipin and its oxidized species. Likely oxidizes the 2'-hydroxyl in the head group of cardiolipin to form a ketone intermediate that undergoes nucleophilic attack by water and fragments into diacylglycerol, dihydroxyacetone and orthophosphate. Has higher affinity for cardiolipin with oxidized fatty acids and may degrade these species during the oxidative stress response to protect cells from apoptosis. By interacting with intracellular amyloid-beta, it may contribute to the neuronal dysfunction associated with Alzheimer disease (AD). Essential for structural and functional integrity of mitochondria. Its function is as follows. In addition to mitochondrial dehydrogenase activity, moonlights as a component of mitochondrial ribonuclease P, a complex that cleaves tRNA molecules in their 5'-ends. Together with TRMT10C/MRPP1, forms a subcomplex of the mitochondrial ribonuclease P, named MRPP1-MRPP2 subcomplex, which displays functions that are independent of the ribonuclease P activity. The MRPP1-MRPP2 subcomplex catalyzes the formation of N(1)-methylguanine and N(1)-methyladenine at position 9 (m1G9 and m1A9, respectively) in tRNAs; HSD17B10/MRPP2 acting as a non-catalytic subunit. The MRPP1-MRPP2 subcomplex also acts as a tRNA maturation platform: following 5'-end cleavage by the mitochondrial ribonuclease P complex, the MRPP1-MRPP2 subcomplex enhances the efficiency of 3'-processing catalyzed by ELAC2, retains the tRNA product after ELAC2 processing and presents the nascent tRNA to the mitochondrial CCA tRNA nucleotidyltransferase TRNT1 enzyme. Associates with mitochondrial DNA complexes at the nucleoids to initiate RNA processing and ribosome assembly. This chain is 3-hydroxyacyl-CoA dehydrogenase type-2 (Hsd17b10), found in Rattus norvegicus (Rat).